Here is a 121-residue protein sequence, read N- to C-terminus: Large ribosomal subunit protein uL14c (121 aa).

It belongs to the universal ribosomal protein uL14 family. Part of the 50S ribosomal subunit.

Its subcellular location is the plastid. It localises to the chloroplast. Functionally, binds to 23S rRNA. This chain is Large ribosomal subunit protein uL14c, found in Pelargonium hortorum (Common geranium).